The sequence spans 236 residues: uncharacterized protein (236 aa).

Residues 1-29 (MNNEKNKQDRENLNRQDERKSSEIKSERK) are disordered.

This is an uncharacterized protein from Staphylococcus aureus.